Here is a 278-residue protein sequence, read N- to C-terminus: Protoheme IX farnesyltransferase 1 (278 aa).

9 helical membrane passes run 12–32 (VIWL…GGVD), 35–55 (LFSL…FNHY), 76–96 (LITP…GISL), 98–118 (FLLL…FYAV), 129–149 (WLNI…GYAL), 158–178 (AVLI…ALAF), 199–221 (ERAV…WLYL), 226–248 (GAGG…YAAV), and 255–275 (MWKM…ALIL).

This sequence belongs to the UbiA prenyltransferase family. Protoheme IX farnesyltransferase subfamily.

The protein resides in the cell membrane. It catalyses the reaction heme b + (2E,6E)-farnesyl diphosphate + H2O = Fe(II)-heme o + diphosphate. It functions in the pathway porphyrin-containing compound metabolism; heme O biosynthesis; heme O from protoheme: step 1/1. Functionally, converts heme B (protoheme IX) to heme O by substitution of the vinyl group on carbon 2 of heme B porphyrin ring with a hydroxyethyl farnesyl side group. In Pyrobaculum aerophilum (strain ATCC 51768 / DSM 7523 / JCM 9630 / CIP 104966 / NBRC 100827 / IM2), this protein is Protoheme IX farnesyltransferase 1.